The sequence spans 443 residues: Thymidine phosphorylase (443 aa).

Belongs to the thymidine/pyrimidine-nucleoside phosphorylase family. In terms of assembly, homodimer.

The catalysed reaction is thymidine + phosphate = 2-deoxy-alpha-D-ribose 1-phosphate + thymine. Its pathway is pyrimidine metabolism; dTMP biosynthesis via salvage pathway; dTMP from thymine: step 1/2. In terms of biological role, the enzymes which catalyze the reversible phosphorolysis of pyrimidine nucleosides are involved in the degradation of these compounds and in their utilization as carbon and energy sources, or in the rescue of pyrimidine bases for nucleotide synthesis. In Shewanella halifaxensis (strain HAW-EB4), this protein is Thymidine phosphorylase.